The following is a 159-amino-acid chain: 2-C-methyl-D-erythritol 2,4-cyclodiphosphate synthase (159 aa).

Residues D9 and H11 each coordinate a divalent metal cation. 4-CDP-2-C-methyl-D-erythritol 2-phosphate contacts are provided by residues 9 to 11 (DVH) and 35 to 36 (HS). H43 lines the a divalent metal cation pocket. Residues 57-59 (DIG), 62-66 (FPDTD), 133-136 (TTTE), F140, and R143 contribute to the 4-CDP-2-C-methyl-D-erythritol 2-phosphate site.

This sequence belongs to the IspF family. As to quaternary structure, homotrimer. Requires a divalent metal cation as cofactor.

The catalysed reaction is 4-CDP-2-C-methyl-D-erythritol 2-phosphate = 2-C-methyl-D-erythritol 2,4-cyclic diphosphate + CMP. Its pathway is isoprenoid biosynthesis; isopentenyl diphosphate biosynthesis via DXP pathway; isopentenyl diphosphate from 1-deoxy-D-xylulose 5-phosphate: step 4/6. In terms of biological role, involved in the biosynthesis of isopentenyl diphosphate (IPP) and dimethylallyl diphosphate (DMAPP), two major building blocks of isoprenoid compounds. Catalyzes the conversion of 4-diphosphocytidyl-2-C-methyl-D-erythritol 2-phosphate (CDP-ME2P) to 2-C-methyl-D-erythritol 2,4-cyclodiphosphate (ME-CPP) with a corresponding release of cytidine 5-monophosphate (CMP). The sequence is that of 2-C-methyl-D-erythritol 2,4-cyclodiphosphate synthase from Mannheimia succiniciproducens (strain KCTC 0769BP / MBEL55E).